The chain runs to 311 residues: Pyrimidine-specific ribonucleoside hydrolase RihA (311 aa).

Residue H240 is part of the active site.

Belongs to the IUNH family. RihA subfamily.

In terms of biological role, hydrolyzes cytidine or uridine to ribose and cytosine or uracil, respectively. The chain is Pyrimidine-specific ribonucleoside hydrolase RihA from Salmonella agona (strain SL483).